A 78-amino-acid chain; its full sequence is Exodeoxyribonuclease 7 small subunit (78 aa).

This sequence belongs to the XseB family. Heterooligomer composed of large and small subunits.

The protein resides in the cytoplasm. The enzyme catalyses Exonucleolytic cleavage in either 5'- to 3'- or 3'- to 5'-direction to yield nucleoside 5'-phosphates.. In terms of biological role, bidirectionally degrades single-stranded DNA into large acid-insoluble oligonucleotides, which are then degraded further into small acid-soluble oligonucleotides. This is Exodeoxyribonuclease 7 small subunit from Desulfitobacterium hafniense (strain Y51).